A 729-amino-acid polypeptide reads, in one-letter code: Fatty acid oxidation complex subunit alpha (729 aa).

The tract at residues 1–189 (MLYKGDTLYL…KIGLVDGVVK (189 aa)) is enoyl-CoA hydratase/isomerase. Residue Asp296 participates in substrate binding. Residues 311–729 (ETPKQAAVLG…ARPVGSLKTA (419 aa)) are 3-hydroxyacyl-CoA dehydrogenase. NAD(+) is bound by residues Met324, Asp343, 400 to 402 (VVE), Lys407, and Ser429. Catalysis depends on His450, which acts as the For 3-hydroxyacyl-CoA dehydrogenase activity. NAD(+) is bound at residue Asn453. Asn500 and Tyr660 together coordinate substrate. The interval 708-729 (RHNEPYYPPVEPARPVGSLKTA) is disordered.

The protein in the N-terminal section; belongs to the enoyl-CoA hydratase/isomerase family. This sequence in the C-terminal section; belongs to the 3-hydroxyacyl-CoA dehydrogenase family. As to quaternary structure, heterotetramer of two alpha chains (FadB) and two beta chains (FadA).

It catalyses the reaction a (3S)-3-hydroxyacyl-CoA + NAD(+) = a 3-oxoacyl-CoA + NADH + H(+). It carries out the reaction a (3S)-3-hydroxyacyl-CoA = a (2E)-enoyl-CoA + H2O. The enzyme catalyses a 4-saturated-(3S)-3-hydroxyacyl-CoA = a (3E)-enoyl-CoA + H2O. The catalysed reaction is (3S)-3-hydroxybutanoyl-CoA = (3R)-3-hydroxybutanoyl-CoA. It catalyses the reaction a (3Z)-enoyl-CoA = a 4-saturated (2E)-enoyl-CoA. It carries out the reaction a (3E)-enoyl-CoA = a 4-saturated (2E)-enoyl-CoA. It functions in the pathway lipid metabolism; fatty acid beta-oxidation. Involved in the aerobic and anaerobic degradation of long-chain fatty acids via beta-oxidation cycle. Catalyzes the formation of 3-oxoacyl-CoA from enoyl-CoA via L-3-hydroxyacyl-CoA. It can also use D-3-hydroxyacyl-CoA and cis-3-enoyl-CoA as substrate. In Salmonella typhimurium (strain LT2 / SGSC1412 / ATCC 700720), this protein is Fatty acid oxidation complex subunit alpha.